Consider the following 533-residue polypeptide: MKLLAFRRLLRIQRVVVRYRLDDLILELPMLPWWLRLLGAALPWRWLPRRKLELTRGARLRLALQDLGPIFIKFGQILSTRRDLLPDDIANELAWLQDKVPPFPPELAVKRIEEQLGAKIEQVFARFEREPLASASVAQVHAARLKSGEEVVVKVIRPNLEPVIRSDIAWLFILARLAERVSSEARRLHPVEVVSDYEKTIVDELDLLREAANASQLRRNFEGSPLLYVPQVYWDWCRPKVLVMERIYGIPVTDLETLRDQRTDFKALAERGVEIFFTQVFRDSFFHADMHPGNIFVSTRAPWSPQYIAVDCGIVGSLTDEDQDYLARNLIAFFKRDYRKVAQLHIDSGWVPAETKVNDFEAAIRTVCEPIFEKPLKDISFGQVLLRLFQTARRFNMEIQPQLVLLQKTLLNIEGLGRQLYPELDLWATAQPFLERWMRERVSPKQLLRNFQQQVEQVPHLSQMARDTLERLSQPHAHNAPPPEWKSSRHDWLGRLVGAVLLVGAAEVGLGQQLEAWPAWVMLAGGVFLILRR.

A helical membrane pass occupies residues 24 to 44; it reads LILELPMLPWWLRLLGAALPW. One can recognise a Protein kinase domain in the interval 126–494; it reads RFEREPLASA…WKSSRHDWLG (369 aa). ATP is bound by residues 132–140 and Lys154; that span reads LASASVAQV. The active-site Proton acceptor is Asp289. A helical membrane pass occupies residues 510-530; that stretch reads LGQQLEAWPAWVMLAGGVFLI.

Belongs to the ABC1 family. UbiB subfamily.

It is found in the cell inner membrane. Its pathway is cofactor biosynthesis; ubiquinone biosynthesis [regulation]. Its function is as follows. Is probably a protein kinase regulator of UbiI activity which is involved in aerobic coenzyme Q (ubiquinone) biosynthesis. This is Probable protein kinase UbiB from Pseudomonas paraeruginosa (strain DSM 24068 / PA7) (Pseudomonas aeruginosa (strain PA7)).